Here is a 104-residue protein sequence, read N- to C-terminus: L-rhamnose mutarotase (104 aa).

Tyrosine 18 is a binding site for substrate. The active-site Proton donor is the histidine 22. Residues tyrosine 41 and 76-77 contribute to the substrate site; that span reads WW.

It belongs to the rhamnose mutarotase family. As to quaternary structure, homodimer.

The protein localises to the cytoplasm. The enzyme catalyses alpha-L-rhamnose = beta-L-rhamnose. It participates in carbohydrate metabolism; L-rhamnose metabolism. Involved in the anomeric conversion of L-rhamnose. This Citrobacter koseri (strain ATCC BAA-895 / CDC 4225-83 / SGSC4696) protein is L-rhamnose mutarotase.